Here is a 586-residue protein sequence, read N- to C-terminus: Arginine--tRNA ligase (586 aa).

The 'HIGH' region signature appears at 127-137 (PNVAKEMHVGH).

Belongs to the class-I aminoacyl-tRNA synthetase family. Monomer.

The protein resides in the cytoplasm. The enzyme catalyses tRNA(Arg) + L-arginine + ATP = L-arginyl-tRNA(Arg) + AMP + diphosphate. This is Arginine--tRNA ligase (argS) from Streptomyces coelicolor (strain ATCC BAA-471 / A3(2) / M145).